The following is a 393-amino-acid chain: Phosphoglycerate kinase (393 aa).

Substrate contacts are provided by residues 21–23 (DLN), Arg36, 59–62 (HLGR), Arg113, and Arg146. ATP-binding positions include Lys197, Glu319, and 345–348 (GGDT).

Belongs to the phosphoglycerate kinase family. In terms of assembly, monomer.

The protein localises to the cytoplasm. The enzyme catalyses (2R)-3-phosphoglycerate + ATP = (2R)-3-phospho-glyceroyl phosphate + ADP. It functions in the pathway carbohydrate degradation; glycolysis; pyruvate from D-glyceraldehyde 3-phosphate: step 2/5. In Nitratidesulfovibrio vulgaris (strain DP4) (Desulfovibrio vulgaris), this protein is Phosphoglycerate kinase.